The chain runs to 1217 residues: Genetic suppressor element 1 (1217 aa).

The disordered stretch occupies residues 1-155; that stretch reads MKGMSHEPKS…SRSSSGGRER (155 aa). Serine 10 bears the Phosphoserine mark. Positions 15 to 33 are enriched in polar residues; sequence MLSTATRTTATVNPLTPSP. Composition is skewed to low complexity over residues 43 to 63 and 76 to 89; these read SPATSSALSAQAAPSSSFAAA and GSSLSSESSPVSSP. Residues serine 84 and serine 95 each carry the phosphoserine modification. Residues 103–114 are compositionally biased toward low complexity; sequence VPMGPIIVPPGG. The residue at position 305 (arginine 305) is an Asymmetric dimethylarginine. A coiled-coil region spans residues 321-403; it reads ERMSGLSAER…REKELLAAKA (83 aa). 2 disordered regions span residues 324-385 and 418-465; these read SGLS…EREL and RGHA…HHTV. Residues 331–385 show a composition bias toward basic and acidic residues; the sequence is LQMDEELRREREREREREREREADREREKEREREREKEREQEKEREREKEREREL. Threonine 433 is modified (phosphothreonine). A compositionally biased stretch (low complexity) spans 450 to 465; the sequence is PVQHPLHPVPTPHHTV. An N6-acetyllysine modification is found at lysine 496. Disordered regions lie at residues 526–579, 633–675, and 699–720; these read HLDM…QLHA, KAEE…GPFL, and FGELSGPLKPGSPYRPPVPRAP. Composition is skewed to basic and acidic residues over residues 551-561 and 633-645; these read NRHEPGGRDPP and KAEEGPRKREPAP. A compositionally biased stretch (pro residues) spans 711-720; the sequence is PYRPPVPRAP. Lysine 739 is modified (N6-acetyllysine). At serine 766 the chain carries Phosphoserine. Disordered regions lie at residues 807-858, 903-930, 948-981, and 1068-1122; these read KEEL…NNSP, ADSLTNSPRDSPAVSLSEPATQQASLDV, EPGKLEQVRPQELSRVQELAPASGEKARLSEAPG, and LQSS…PKRK. Basic residues predominate over residues 813-822; the sequence is QKRRKRRRML. Phosphoserine occurs at positions 826 and 828. Composition is skewed to polar residues over residues 831–840 and 847–858; these read TIQSKRQTPS and TRYSPDEMNNSP. Phosphoserine is present on serine 857. Position 907 is a phosphothreonine (threonine 907). The residue at position 909 (serine 909) is a Phosphoserine. Residues 1068-1085 are compositionally biased toward polar residues; sequence LQSSSRAPPPQHNGQQEP. A compositionally biased stretch (acidic residues) spans 1099–1117; that stretch reads RDSEEEEEEDDEDGEDEEE. A Phosphoserine modification is found at serine 1101. The stretch at 1127–1201 forms a coiled coil; it reads EAVFEAYQEH…ELDHLRKCLA (75 aa).

In terms of assembly, may be a component of a BHC histone deacetylase complex that contains HDAC1, HDAC2, HMG20B/BRAF35, KDM1A, RCOR1/CoREST, PHF21A/BHC80, ZMYM2, ZNF217, ZMYM3, GSE1 and GTF2I.

The chain is Genetic suppressor element 1 (GSE1) from Homo sapiens (Human).